The primary structure comprises 276 residues: Putative translation initiation factor eIF-2B subunit 2-like (276 aa).

Belongs to the eIF-2B alpha/beta/delta subunits family. Complex of two different subunits.

Its function is as follows. Catalyzes the exchange of initiation factor 2-bound GDP for GTP. The polypeptide is Putative translation initiation factor eIF-2B subunit 2-like (Pyrococcus abyssi (strain GE5 / Orsay)).